The primary structure comprises 230 residues: 3-beta-hydroxysteroid-Delta(8),Delta(7)-isomerase (230 aa).

An N-acetylthreonine modification is found at Thr-2. Transmembrane regions (helical) follow at residues 29–49, 66–86, 121–141, and 185–205; these read SHIL…TWLL, LCWF…FSLY, METV…IAFL, and FWFY…ILVL. The EXPERA domain maps to 61–204; that stretch reads GRRLALCWFA…VWLVIPSILV (144 aa).

It belongs to the EBP family.

The protein localises to the endoplasmic reticulum membrane. Its subcellular location is the nucleus envelope. The protein resides in the cytoplasmic vesicle. The enzyme catalyses lathosterol = 5alpha-cholest-8-en-3beta-ol. It carries out the reaction zymosterol = 5alpha-cholesta-7,24-dien-3beta-ol. The catalysed reaction is 5,6alpha-epoxy-5alpha-cholestan-3beta-ol + H2O = 5alpha-cholestane-3beta,5,6beta-triol. It catalyses the reaction 5,6beta-epoxy-5beta-cholestan-3beta-ol + H2O = 5alpha-cholestane-3beta,5,6beta-triol. The protein operates within steroid biosynthesis; cholesterol biosynthesis. Its function is as follows. Isomerase that catalyzes the conversion of Delta(8)-sterols to their corresponding Delta(7)-isomers. Functionally, component of the microsomal antiestrogen binding site (AEBS), a multiproteic complex at the ER membrane that consists of an association between EBP and 7-dehydrocholesterol reductase/DHCR7. This complex is responsible for cholesterol-5,6-epoxide hydrolase (ChEH) activity, which consists in the hydration of cholesterol-5,6-epoxides (5,6-EC) into cholestane-3beta,5alpha,6beta-triol (CT). The precise role of each component of this complex has not been described yet. In Mus musculus (Mouse), this protein is 3-beta-hydroxysteroid-Delta(8),Delta(7)-isomerase.